Consider the following 353-residue polypeptide: Histidinol-phosphate aminotransferase (353 aa).

N6-(pyridoxal phosphate)lysine is present on K218.

The protein belongs to the class-II pyridoxal-phosphate-dependent aminotransferase family. Histidinol-phosphate aminotransferase subfamily. Homodimer. It depends on pyridoxal 5'-phosphate as a cofactor.

The catalysed reaction is L-histidinol phosphate + 2-oxoglutarate = 3-(imidazol-4-yl)-2-oxopropyl phosphate + L-glutamate. It participates in amino-acid biosynthesis; L-histidine biosynthesis; L-histidine from 5-phospho-alpha-D-ribose 1-diphosphate: step 7/9. This chain is Histidinol-phosphate aminotransferase, found in Synechococcus sp. (strain JA-2-3B'a(2-13)) (Cyanobacteria bacterium Yellowstone B-Prime).